The primary structure comprises 87 residues: RNA-binding protein Hfq (87 aa).

One can recognise a Sm domain in the interval 9-68 (DPFLNALRRERIPVSIYLVNGIKLQGQIESFDQFVILLKNTVSQMVYKHAISTVVPARAV).

This sequence belongs to the Hfq family. In terms of assembly, homohexamer.

Its function is as follows. RNA chaperone that binds small regulatory RNA (sRNAs) and mRNAs to facilitate mRNA translational regulation in response to envelope stress, environmental stress and changes in metabolite concentrations. Also binds with high specificity to tRNAs. This chain is RNA-binding protein Hfq, found in Aeromonas salmonicida (strain A449).